Reading from the N-terminus, the 111-residue chain is Large ribosomal subunit protein uL22 (111 aa).

Belongs to the universal ribosomal protein uL22 family. In terms of assembly, part of the 50S ribosomal subunit.

In terms of biological role, this protein binds specifically to 23S rRNA; its binding is stimulated by other ribosomal proteins, e.g. L4, L17, and L20. It is important during the early stages of 50S assembly. It makes multiple contacts with different domains of the 23S rRNA in the assembled 50S subunit and ribosome. The globular domain of the protein is located near the polypeptide exit tunnel on the outside of the subunit, while an extended beta-hairpin is found that lines the wall of the exit tunnel in the center of the 70S ribosome. The protein is Large ribosomal subunit protein uL22 of Clostridium novyi (strain NT).